A 217-amino-acid chain; its full sequence is Large ribosomal subunit protein uL1 (217 aa).

Belongs to the universal ribosomal protein uL1 family.

The polypeptide is Large ribosomal subunit protein uL1 (RPL10A) (Eremothecium gossypii (strain ATCC 10895 / CBS 109.51 / FGSC 9923 / NRRL Y-1056) (Yeast)).